The following is a 252-amino-acid chain: Triosephosphate isomerase (252 aa).

10 to 12 serves as a coordination point for substrate; that stretch reads NWK. The active-site Electrophile is the His-96. Glu-168 functions as the Proton acceptor in the catalytic mechanism. Residues Gly-174, Ser-214, and 235–236 contribute to the substrate site; that span reads GG.

Belongs to the triosephosphate isomerase family. In terms of assembly, homodimer.

It localises to the cytoplasm. The catalysed reaction is D-glyceraldehyde 3-phosphate = dihydroxyacetone phosphate. It functions in the pathway carbohydrate biosynthesis; gluconeogenesis. The protein operates within carbohydrate degradation; glycolysis; D-glyceraldehyde 3-phosphate from glycerone phosphate: step 1/1. Functionally, involved in the gluconeogenesis. Catalyzes stereospecifically the conversion of dihydroxyacetone phosphate (DHAP) to D-glyceraldehyde-3-phosphate (G3P). In Streptococcus gordonii (strain Challis / ATCC 35105 / BCRC 15272 / CH1 / DL1 / V288), this protein is Triosephosphate isomerase.